We begin with the raw amino-acid sequence, 92 residues long: Small ribosomal subunit protein uS19 (92 aa).

Belongs to the universal ribosomal protein uS19 family.

Protein S19 forms a complex with S13 that binds strongly to the 16S ribosomal RNA. This Photorhabdus laumondii subsp. laumondii (strain DSM 15139 / CIP 105565 / TT01) (Photorhabdus luminescens subsp. laumondii) protein is Small ribosomal subunit protein uS19.